A 269-amino-acid polypeptide reads, in one-letter code: Thymidylate synthase (269 aa).

Residue arginine 26 participates in dUMP binding. Residue histidine 56 participates in (6R)-5,10-methylene-5,6,7,8-tetrahydrofolate binding. Position 131 to 132 (131 to 132 (RR)) interacts with dUMP. Cysteine 151 (nucleophile) is an active-site residue. DUMP is bound by residues 171–174 (RSAD), asparagine 182, and 212–214 (HIY). Aspartate 174 is a binding site for (6R)-5,10-methylene-5,6,7,8-tetrahydrofolate. A (6R)-5,10-methylene-5,6,7,8-tetrahydrofolate-binding site is contributed by alanine 268.

Belongs to the thymidylate synthase family. Bacterial-type ThyA subfamily. In terms of assembly, homodimer.

It localises to the cytoplasm. The enzyme catalyses dUMP + (6R)-5,10-methylene-5,6,7,8-tetrahydrofolate = 7,8-dihydrofolate + dTMP. Its pathway is pyrimidine metabolism; dTTP biosynthesis. Functionally, catalyzes the reductive methylation of 2'-deoxyuridine-5'-monophosphate (dUMP) to 2'-deoxythymidine-5'-monophosphate (dTMP) while utilizing 5,10-methylenetetrahydrofolate (mTHF) as the methyl donor and reductant in the reaction, yielding dihydrofolate (DHF) as a by-product. This enzymatic reaction provides an intracellular de novo source of dTMP, an essential precursor for DNA biosynthesis. The polypeptide is Thymidylate synthase (Leifsonia xyli subsp. xyli (strain CTCB07)).